A 159-amino-acid chain; its full sequence is MRLNELRDNDGATKIRTRVGRGIGSGKGKTGGRGVKGQKSRSGVAIKGFEGGQMPLHMRLPKRGFNKPNRKAWAEVNLGRLEKAIAEGKIDAKKPIDADVLIAAGLVRRALDGVRLLAKGELKSKVEITLAGASKAAIAAVEKAGGKVTLTAVADDAAE.

Positions 1–13 are enriched in basic and acidic residues; sequence MRLNELRDNDGAT. The tract at residues 1 to 41 is disordered; it reads MRLNELRDNDGATKIRTRVGRGIGSGKGKTGGRGVKGQKSR. Residues 21 to 35 are compositionally biased toward gly residues; it reads RGIGSGKGKTGGRGV.

The protein belongs to the universal ribosomal protein uL15 family. In terms of assembly, part of the 50S ribosomal subunit.

Functionally, binds to the 23S rRNA. This chain is Large ribosomal subunit protein uL15, found in Maricaulis maris (strain MCS10) (Caulobacter maris).